A 450-amino-acid polypeptide reads, in one-letter code: C4-dicarboxylate transport protein (450 aa).

Transmembrane regions (helical) follow at residues 25–45 (VVFAIIIGVLLGHFQPEYGAA), 56–76 (LIKMIIAPVIFLTIVTGIASM), 90–110 (MAYFLTFSTLALVVGLVVANV), 162–182 (ILQVLLVAVLFGVSLAMVGDA), 200–220 (LVNIVMKAAPIGAFGAMAFTI), 234–254 (LVLTFYITSAVFVLVVLGAVA), 319–339 (IYMTLAALFIAQATDTHLTLG), and 367–387 (AATLAVVPEVPVAGMALILGV).

The protein belongs to the dicarboxylate/amino acid:cation symporter (DAACS) (TC 2.A.23) family.

The protein resides in the cell inner membrane. In terms of biological role, responsible for the transport of dicarboxylates such as succinate, fumarate, and malate from the periplasm across the membrane. This Acidovorax sp. (strain JS42) protein is C4-dicarboxylate transport protein.